Here is a 545-residue protein sequence, read N- to C-terminus: Chaperonin GroEL 1 (545 aa).

Residues 30-33 (TLGP), Lys51, 87-91 (DGTTT), Gly415, and Asp496 contribute to the ATP site.

The protein belongs to the chaperonin (HSP60) family. Forms a cylinder of 14 subunits composed of two heptameric rings stacked back-to-back. Interacts with the co-chaperonin GroES.

The protein resides in the cytoplasm. It carries out the reaction ATP + H2O + a folded polypeptide = ADP + phosphate + an unfolded polypeptide.. Its function is as follows. Together with its co-chaperonin GroES, plays an essential role in assisting protein folding. The GroEL-GroES system forms a nano-cage that allows encapsulation of the non-native substrate proteins and provides a physical environment optimized to promote and accelerate protein folding. This chain is Chaperonin GroEL 1, found in Nitrobacter hamburgensis (strain DSM 10229 / NCIMB 13809 / X14).